Consider the following 183-residue polypeptide: Ferritin heavy polypeptide-like 17 (183 aa).

Residues 11 to 160 (QKYDTNCDAA…GYVSNLRKIC (150 aa)) form the Ferritin-like diiron domain. Fe cation contacts are provided by E28, H66, E108, and Q142.

Belongs to the ferritin family. In terms of tissue distribution, testis specific. Also expressed in several cancers.

The chain is Ferritin heavy polypeptide-like 17 (FTHL17) from Homo sapiens (Human).